Consider the following 296-residue polypeptide: GTPase Era (296 aa).

The Era-type G domain occupies Arg7 to Gln174. Residues Gly15 to Ser22 form a G1 region. Gly15–Ser22 is a GTP binding site. Positions Gln41–His45 are G2. Residues Asp62–Gly65 form a G3 region. GTP contacts are provided by residues Asp62 to Phe66 and Ser123 to Asp126. The interval Ser123–Asp126 is G4. A G5 region spans residues Val153 to Ala155. A KH type-2 domain is found at Val205–Lys281.

This sequence belongs to the TRAFAC class TrmE-Era-EngA-EngB-Septin-like GTPase superfamily. Era GTPase family. Monomer.

The protein localises to the cytoplasm. It localises to the cell inner membrane. An essential GTPase that binds both GDP and GTP, with rapid nucleotide exchange. Plays a role in 16S rRNA processing and 30S ribosomal subunit biogenesis and possibly also in cell cycle regulation and energy metabolism. The protein is GTPase Era of Bordetella parapertussis (strain 12822 / ATCC BAA-587 / NCTC 13253).